The sequence spans 331 residues: UBX domain-containing protein 2B (331 aa).

Disordered stretches follow at residues 1–26 (MAEGGGAEPEEQERRSSRPRPPSARD) and 38–63 (EMKCKSSKPDRSTATAFKSPRTPPLR). A2 carries the post-translational modification N-acetylalanine. The span at 38 to 48 (EMKCKSSKPDR) shows a compositional bias: basic and acidic residues. S56 is modified (phosphoserine). At T59 the chain carries Phosphothreonine. A Phosphoserine modification is found at S66. Positions 141-206 (DVQILLRLWS…MEDHQDQEYI (66 aa)) constitute an SEP domain. A phosphoserine mark is found at S231, S234, and S235. A UBX domain is found at 252 to 329 (DSVPTTKIQI…DILNTVILQQ (78 aa)).

The protein belongs to the NSFL1C family. As to quaternary structure, interacts with VCP. Does not bind ubiquitin. In terms of tissue distribution, present at high level in brain. Also present in liver, kidney, spleen, testis, lung and heart (at protein level).

Its subcellular location is the nucleus. It is found in the cytoplasm. The protein localises to the cytosol. It localises to the endoplasmic reticulum. The protein resides in the golgi apparatus. Its subcellular location is the cytoskeleton. It is found in the microtubule organizing center. The protein localises to the centrosome. Adapter protein required for Golgi and endoplasmic reticulum biogenesis. Involved in Golgi and endoplasmic reticulum maintenance during interphase and in their reassembly at the end of mitosis. The complex formed with VCP has membrane fusion activity; membrane fusion activity requires USO1-GOLGA2 tethering and BET1L. VCPIP1 is also required, but not its deubiquitinating activity. Together with NSFL1C/p47, regulates the centrosomal levels of kinase AURKA/Aurora A during mitotic progression by promoting AURKA removal from centrosomes in prophase. Also, regulates spindle orientation during mitosis. In Rattus norvegicus (Rat), this protein is UBX domain-containing protein 2B (Ubxn2b).